Here is a 464-residue protein sequence, read N- to C-terminus: Argininosuccinate lyase 2 (464 aa).

It belongs to the lyase 1 family. Argininosuccinate lyase subfamily.

The protein localises to the cytoplasm. It catalyses the reaction 2-(N(omega)-L-arginino)succinate = fumarate + L-arginine. Its pathway is amino-acid biosynthesis; L-arginine biosynthesis; L-arginine from L-ornithine and carbamoyl phosphate: step 3/3. The protein is Argininosuccinate lyase 2 of Pseudomonas fluorescens (strain Pf0-1).